Consider the following 450-residue polypeptide: MTSWNFVCLSLGSNLGNRHEHIRRAYASLKKAGIRNLKSSVILETKALLLEGAPKEWDLPYFNSVVIGETQLSPDELIEEIKMIESRFGQDASLKWGPRPIDIDVLFYGDEAFSYHSDKCTIPHPKVLERPFLLSMIASLCPYRRFRLEGSSCNGKTFAELAAIYPLTEEDALGSFGSATQIMGIVNITDNSISDTGLFLEARRAAAHAERLFAEGASIIDLGAQATNPRVKDLGSVEQEWERLEPVLRLLAERWGAAQQCPDVSIDTFRPEIIRRAVEVFPIRWINDVSGGSLEMAHLAKEFGLRLLINHSCSLPPRPDCVLSYEESPIEQMLRWGESQLEQFAQVGLDTSWQVVFDPGIGFGKTPVQSMLLMDGVKQFKRVLECPVLIGHSRKSCLSMLGRFNSNDRDWETIGCSVSLHDRGVDYLRVHQVEGNRRALAAAAWAGMFV.

Residues 1–166 form an HPPK region; it reads MTSWNFVCLS…TFAELAAIYP (166 aa). The Pterin-binding domain occupies 180–441; sequence TQIMGIVNIT…QVEGNRRALA (262 aa). The interval 182 to 450 is DHPS; that stretch reads IMGIVNITDN…AAAAWAGMFV (269 aa). Asn-187 contacts Mg(2+). (7,8-dihydropterin-6-yl)methyl diphosphate contacts are provided by residues Thr-227, Asp-267, Asn-287, Asp-358, Lys-395, and 429–431; that span reads RVH.

This sequence in the C-terminal section; belongs to the DHPS family. The protein in the N-terminal section; belongs to the HPPK family. Mg(2+) serves as cofactor.

The enzyme catalyses 6-hydroxymethyl-7,8-dihydropterin + ATP = (7,8-dihydropterin-6-yl)methyl diphosphate + AMP + H(+). The catalysed reaction is (7,8-dihydropterin-6-yl)methyl diphosphate + 4-aminobenzoate = 7,8-dihydropteroate + diphosphate. It functions in the pathway cofactor biosynthesis; tetrahydrofolate biosynthesis; 2-amino-4-hydroxy-6-hydroxymethyl-7,8-dihydropteridine diphosphate from 7,8-dihydroneopterin triphosphate: step 4/4. It participates in cofactor biosynthesis; tetrahydrofolate biosynthesis; 7,8-dihydrofolate from 2-amino-4-hydroxy-6-hydroxymethyl-7,8-dihydropteridine diphosphate and 4-aminobenzoate: step 1/2. The polypeptide is Folate synthesis bifunctional protein (folKP) (Chlamydia trachomatis serovar D (strain ATCC VR-885 / DSM 19411 / UW-3/Cx)).